The chain runs to 134 residues: ATP synthase epsilon chain, chloroplastic (134 aa).

The protein belongs to the ATPase epsilon chain family. As to quaternary structure, F-type ATPases have 2 components, CF(1) - the catalytic core - and CF(0) - the membrane proton channel. CF(1) has five subunits: alpha(3), beta(3), gamma(1), delta(1), epsilon(1). CF(0) has three main subunits: a, b and c.

It localises to the plastid. The protein resides in the chloroplast thylakoid membrane. Produces ATP from ADP in the presence of a proton gradient across the membrane. The chain is ATP synthase epsilon chain, chloroplastic from Chlorella vulgaris (Green alga).